The primary structure comprises 166 residues: Ribosome maturation factor RimP (166 aa).

The protein belongs to the RimP family.

The protein localises to the cytoplasm. Functionally, required for maturation of 30S ribosomal subunits. In Psychrobacter sp. (strain PRwf-1), this protein is Ribosome maturation factor RimP.